A 209-amino-acid chain; its full sequence is Orotate phosphoribosyltransferase (209 aa).

Residues R96, K100, H102, and 122–130 (EDLISTGGS) contribute to the 5-phospho-alpha-D-ribose 1-diphosphate site. S126 serves as a coordination point for orotate.

It belongs to the purine/pyrimidine phosphoribosyltransferase family. PyrE subfamily. In terms of assembly, homodimer. Requires Mg(2+) as cofactor.

It catalyses the reaction orotidine 5'-phosphate + diphosphate = orotate + 5-phospho-alpha-D-ribose 1-diphosphate. The protein operates within pyrimidine metabolism; UMP biosynthesis via de novo pathway; UMP from orotate: step 1/2. Its function is as follows. Catalyzes the transfer of a ribosyl phosphate group from 5-phosphoribose 1-diphosphate to orotate, leading to the formation of orotidine monophosphate (OMP). The chain is Orotate phosphoribosyltransferase from Lactococcus lactis subsp. cremoris (strain MG1363).